A 388-amino-acid polypeptide reads, in one-letter code: S-adenosylmethionine synthase (388 aa).

H17 serves as a coordination point for ATP. D19 is a binding site for Mg(2+). E45 is a binding site for K(+). L-methionine contacts are provided by E58 and Q106. Residues 106–116 (QSAHISQGVDR) form a flexible loop region. Residues 166–168 (DAK), D241, 247–248 (RK), A264, and K268 contribute to the ATP site. Position 241 (D241) interacts with L-methionine. K272 is a binding site for L-methionine.

It belongs to the AdoMet synthase family. In terms of assembly, homotetramer; dimer of dimers. The cofactor is Mg(2+). K(+) is required as a cofactor.

It localises to the cytoplasm. It carries out the reaction L-methionine + ATP + H2O = S-adenosyl-L-methionine + phosphate + diphosphate. It functions in the pathway amino-acid biosynthesis; S-adenosyl-L-methionine biosynthesis; S-adenosyl-L-methionine from L-methionine: step 1/1. In terms of biological role, catalyzes the formation of S-adenosylmethionine (AdoMet) from methionine and ATP. The overall synthetic reaction is composed of two sequential steps, AdoMet formation and the subsequent tripolyphosphate hydrolysis which occurs prior to release of AdoMet from the enzyme. The protein is S-adenosylmethionine synthase of Paracoccus denitrificans (strain Pd 1222).